The following is a 263-amino-acid chain: Thiazole synthase (263 aa).

Lysine 102 functions as the Schiff-base intermediate with DXP in the catalytic mechanism. 1-deoxy-D-xylulose 5-phosphate is bound by residues glycine 164, 190 to 191, and 212 to 213; these read AG and NT.

The protein belongs to the ThiG family. In terms of assembly, homotetramer. Forms heterodimers with either ThiH or ThiS.

It is found in the cytoplasm. The catalysed reaction is [ThiS sulfur-carrier protein]-C-terminal-Gly-aminoethanethioate + 2-iminoacetate + 1-deoxy-D-xylulose 5-phosphate = [ThiS sulfur-carrier protein]-C-terminal Gly-Gly + 2-[(2R,5Z)-2-carboxy-4-methylthiazol-5(2H)-ylidene]ethyl phosphate + 2 H2O + H(+). It functions in the pathway cofactor biosynthesis; thiamine diphosphate biosynthesis. Its function is as follows. Catalyzes the rearrangement of 1-deoxy-D-xylulose 5-phosphate (DXP) to produce the thiazole phosphate moiety of thiamine. Sulfur is provided by the thiocarboxylate moiety of the carrier protein ThiS. In vitro, sulfur can be provided by H(2)S. In Helicobacter hepaticus (strain ATCC 51449 / 3B1), this protein is Thiazole synthase.